Here is a 447-residue protein sequence, read N- to C-terminus: N-succinylarginine dihydrolase (447 aa).

Residues 19–28 (AGLSFGNEAS), Asn-110, and 137–138 (HR) contribute to the substrate site. The active site involves Glu-174. Position 212 (Arg-212) interacts with substrate. Residue His-248 is part of the active site. Substrate is bound by residues Asp-250 and Asn-359. Cys-365 serves as the catalytic Nucleophile.

This sequence belongs to the succinylarginine dihydrolase family. In terms of assembly, homodimer.

The catalysed reaction is N(2)-succinyl-L-arginine + 2 H2O + 2 H(+) = N(2)-succinyl-L-ornithine + 2 NH4(+) + CO2. Its pathway is amino-acid degradation; L-arginine degradation via AST pathway; L-glutamate and succinate from L-arginine: step 2/5. In terms of biological role, catalyzes the hydrolysis of N(2)-succinylarginine into N(2)-succinylornithine, ammonia and CO(2). The polypeptide is N-succinylarginine dihydrolase (Salmonella paratyphi B (strain ATCC BAA-1250 / SPB7)).